The primary structure comprises 92 residues: Integration host factor subunit beta (92 aa).

This sequence belongs to the bacterial histone-like protein family. As to quaternary structure, heterodimer of an alpha and a beta chain.

This protein is one of the two subunits of integration host factor, a specific DNA-binding protein that functions in genetic recombination as well as in transcriptional and translational control. The chain is Integration host factor subunit beta from Azotobacter vinelandii (strain DJ / ATCC BAA-1303).